Here is a 1163-residue protein sequence, read N- to C-terminus: Rho GTPase-activating protein 45 (1163 aa).

The segment at 1-99 (MFSRKKRELM…KRPTSLSRHA (99 aa)) is disordered. Phosphoserine occurs at positions 23 and 25. Residues 55 to 65 (LPKELPRKDGA) show a composition bias toward basic and acidic residues. Phosphoserine is present on residues Ser100, Ser120, and Ser126. Disordered stretches follow at residues 118–137 (HRSPLTAASPGELPTEGTGP), 262–282 (PPGDSSQSMESLYGSGSEGTP), and 454–475 (EEEQAGTAPGAGSTATKTLDKR). In terms of domain architecture, F-BAR spans 296 to 566 (EEVDVLLQRC…SSKLYDPGQQ (271 aa)). The stretch at 403-526 (EHEKRRKEIK…QIQEVIRQSD (124 aa)) forms a coiled coil. The span at 458-470 (AGTAPGAGSTATK) shows a compositional bias: low complexity. Phosphoserine is present on residues Ser596, Ser605, and Ser619. The disordered stretch occupies residues 610–695 (DVAGPEAAGS…VDPEGGAGAS (86 aa)). Positions 633-644 (KGHRAGRGHQVH) are enriched in basic residues. Ser646 is subject to Phosphoserine. A compositionally biased stretch (low complexity) spans 673-682 (TSSSGTMSST). The Phorbol-ester/DAG-type zinc finger occupies 729 to 774 (THRLRKLRTPAKCRECNSYVYFQGAECEECCLACHKKCLETLAIQC). One can recognise a Rho-GAP domain in the interval 788 to 1001 (QDFSHAARSA…TLIVHYGLVF (214 aa)). A phosphoserine mark is found at Ser976, Ser1054, Ser1057, and Ser1059. Disordered regions lie at residues 1042–1067 (AAEDGCRESRVVSNDSDSDLEEASEL) and 1087–1163 (SEAS…PEFV). Low complexity predominate over residues 1087–1099 (SEASLEEASGSHS). Polar residues predominate over residues 1125–1137 (SGFNTNQSNNVLQ).

The protein resides in the cytoplasm. It localises to the cell projection. It is found in the ruffle membrane. In terms of biological role, contains a GTPase activator for the Rho-type GTPases (RhoGAP) domain that would be able to negatively regulate the actin cytoskeleton as well as cell spreading. However, also contains N-terminally a BAR-domin which is able to play an autoinhibitory effect on this RhoGAP activity. The protein is Rho GTPase-activating protein 45 of Pongo abelii (Sumatran orangutan).